The sequence spans 457 residues: UDP-N-acetyl-alpha-D-muramoyl-L-alanyl-L-glutamate epimerase (457 aa).

The protein belongs to the MurL family.

It catalyses the reaction UDP-N-acetyl-alpha-D-muramoyl-L-alanyl-L-glutamate + ATP + H2O = UDP-N-acetyl-alpha-D-muramoyl-L-alanyl-D-glutamate + AMP + diphosphate + H(+). The protein operates within cell wall biogenesis; peptidoglycan biosynthesis. Functionally, cell wall formation. Catalyzes epimerization of the terminal L-glutamate in UDP-N-acetyl-alpha-D-muramoyl-L-alanyl-L-glutamate. This chain is UDP-N-acetyl-alpha-D-muramoyl-L-alanyl-L-glutamate epimerase, found in Salinispora tropica (strain ATCC BAA-916 / DSM 44818 / JCM 13857 / NBRC 105044 / CNB-440).